Consider the following 297-residue polypeptide: Heterogeneous nuclear ribonucleoprotein D-like (297 aa).

Positions 1 to 21 (MTGFGATPDFNEGSKINASKN) are disordered. 2 RRM domains span residues 26–108 (GKMF…KGKE) and 111–190 (KKVF…QPKE). Residues 192-224 (YRQQQQKQQKGGRGAATGRGGARGRGRGQGWNQ) are disordered. A compositionally biased stretch (gly residues) spans 202-222 (GGRGAATGRGGARGRGRGQGW).

The protein resides in the nucleus. It is found in the cytoplasm. In terms of biological role, acts as a transcriptional regulator. Binds DNA and RNA. The protein is Heterogeneous nuclear ribonucleoprotein D-like (hnrnpdl) of Xenopus tropicalis (Western clawed frog).